A 529-amino-acid polypeptide reads, in one-letter code: Beta-hexosaminidase subunit alpha (529 aa).

An N-terminal signal peptide occupies residues 1–22 (MTSSRLWFSLLLAAAFAGRATA). Residues 23–88 (LWPWPQNFQT…PRPYLTGKRH (66 aa)) constitute a propeptide that is removed on maturation. An intrachain disulfide couples Cys-58 to Cys-104. Residues Asn-115, Asn-157, and Asn-295 are each glycosylated (N-linked (GlcNAc...) asparagine). Cys-277 and Cys-328 are joined by a disulfide. Glu-323 serves as the catalytic Proton donor. Positions 423 to 424 (NR) are critical for hydrolysis GM2 gangliosides. Cys-505 and Cys-522 are disulfide-bonded.

This sequence belongs to the glycosyl hydrolase 20 family. As to quaternary structure, there are 3 beta-hexosaminidase isozymes: isozyme A (hexosaminidase A) is a heterodimer composed of one subunit alpha and one subunit beta (chain A and B); isozyme B (hexosaminidase B) is a homodimer of two beta subunits (two chains A and B); isozyme S (hexosaminidase S) is a homodimer of two alpha subunits. The composition of the dimer (isozyme A versus isozyme S) has a significant effect on the substrate specificity of the alpha subunit active site. Post-translationally, N-linked glycan at Asn-115 consists of Man(3)-GlcNAc(2). N-linked glycan at Asn-157 consists of either GlcNAc or GlcNAc(2)-Man(7-9). N-linked glycan at Asn-295 consists of either GlcNAc, GlcNAc-Fuc, or GlcNAc(2)-Man(4).

Its subcellular location is the lysosome. The enzyme catalyses Hydrolysis of terminal non-reducing N-acetyl-D-hexosamine residues in N-acetyl-beta-D-hexosaminides.. It carries out the reaction N-acetyl-beta-D-galactosaminyl-(1-&gt;4)-beta-D-3-sulfogalactosyl-(1-&gt;4)-beta-D-glucosyl-(1&lt;-&gt;1')-ceramide + H2O = a beta-D-3-sulfogalactosyl-(1-&gt;4)-beta-D-glucosyl-(1&lt;-&gt;1')-ceramide + N-acetyl-beta-D-galactosamine. The catalysed reaction is a ganglioside GM2 (d18:1(4E)) + H2O = a ganglioside GM3 (d18:1(4E)) + N-acetyl-beta-D-galactosamine. It catalyses the reaction a ganglioside GM2 + H2O = a ganglioside GM3 + N-acetyl-beta-D-galactosamine. The enzyme catalyses beta-D-GalNAc-(1-&gt;4)-alpha-L-IdoA-(1-&gt;3)-beta-D-GalNAc-4-sulfate-(1-&gt;4)-alpha-L-IdoA-(1-&gt;3)-D-GalNAc-4-sulfate + H2O = alpha-L-IdoA-(1-&gt;3)-beta-D-GalNAc-4-sulfate-(1-&gt;4)-alpha-L-IdoA-(1-&gt;3)-D-GalNAc-4-sulfate + N-acetyl-D-galactosamine. It carries out the reaction N-acetyl-beta-D-6-sulfogalactosaminyl-(1-&gt;4)-alpha-L-iduronyl-(1-&gt;3)-N-acetyl-D-6-sulfogalactosamine + H2O = alpha-L-iduronyl-(1-&gt;3)-N-acetyl-D-6-sulfogalactosamine + N-acetyl-D-6-sulfogalactosamine. Its activity is regulated as follows. Addition of GM2A stimulates the hydrolysis of sulfated glycosphingolipid SM2 and the ganglioside GM2. Its function is as follows. Hydrolyzes the non-reducing end N-acetyl-D-hexosamine and/or sulfated N-acetyl-D-hexosamine of glycoconjugates, such as the oligosaccharide moieties from proteins and neutral glycolipids, or from certain mucopolysaccharides. The isozyme S is as active as the isozyme A on the anionic bis-sulfated glycans, the chondroitin-6-sulfate trisaccharide (C6S-3), and the dermatan sulfate pentasaccharide, and the sulfated glycosphingolipid SM2. The isozyme B does not hydrolyze each of these substrates, however hydrolyzes efficiently neutral oligosaccharide. Only the isozyme A is responsible for the degradation of GM2 gangliosides in the presence of GM2A. This chain is Beta-hexosaminidase subunit alpha, found in Homo sapiens (Human).